A 104-amino-acid chain; its full sequence is MINMKVAISMDVDKISNSFEDCKYFLIVRIDDNEVKSTKVIFNDESGKKSIVKENVNAIICKNISEENYKKFSKKIEIYHAEGDDVDKNISLFIEGELSKISNP.

This is an uncharacterized protein from Methanocaldococcus jannaschii (strain ATCC 43067 / DSM 2661 / JAL-1 / JCM 10045 / NBRC 100440) (Methanococcus jannaschii).